The primary structure comprises 928 residues: BCAS3 microtubule associated cell migration factor (928 aa).

Met-1 bears the N-acetylmethionine mark. Residue Lys-215 forms a Glycyl lysine isopeptide (Lys-Gly) (interchain with G-Cter in SUMO1); alternate linkage. A Glycyl lysine isopeptide (Lys-Gly) (interchain with G-Cter in SUMO2); alternate cross-link involves residue Lys-215. 2 required for recruitment to preautophagosomal structure in response to mitophagy regions span residues Arg-254–Ser-312 and Tyr-437–Pro-560. Residues Ser-461, Ser-480, and Ser-488 each carry the phosphoserine modification. Disordered stretches follow at residues Thr-472 to Ser-518 and Val-795 to Ser-816. Composition is skewed to low complexity over residues Ser-480 to Leu-494 and Asn-505 to Asn-514. Ser-838, Ser-886, and Ser-898 each carry phosphoserine. A disordered region spans residues Glu-868–Pro-928. Residues Ile-887 to Ile-901 are compositionally biased toward low complexity.

The protein belongs to the BCAS3 family. Interacts with histone H3, ESR1, KAT2B and PELP1; the interactions occur in a estrogen-dependent manner. Interacts with beta-tubulin and VIM. Interacts (via C-terminal) with PHAF1; the interaction is requrired for the association with the phagophore. Expressed in blood islands and yolk sac blood islands (at protein level). Highly expressed in mammary tumors. Expressed in eostrogen-induced epithelial cells of mammary glands. Expressed in brain, heart, kidney, lung, liver and spleen. Expressed in embryonic stem cells, embryoid bodies, endothelial cells and fibroblasts.

The protein resides in the nucleus. Its subcellular location is the cytoplasm. It is found in the cytoskeleton. It localises to the preautophagosomal structure. In terms of biological role, functions synergistically with PELP1 as a transcriptional coactivator of estrogen receptor-responsive genes. Stimulates histone acetyltransferase activity. Binds to chromatin. Plays a role in angiogenesis. Participates in the regulation of cell polarity and directional endothelial cell migration by mediating both the activation and recruitment of CDC42 and the reorganization of the actin cytoskeleton at the cell leading edge. Promotes filipodia formation. Plays a regulatory role in autophagic activity. In complex with PHAF1, associates with the preautophagosomal structure during both non-selective and selective autophagy. Probably binds phosphatidylinositol 3-phosphate (PtdIns3P) which would mediate the recruitment preautophagosomal structures. This is BCAS3 microtubule associated cell migration factor from Mus musculus (Mouse).